Reading from the N-terminus, the 336-residue chain is tRNA(Ile)-lysidine synthase (336 aa).

Residue S40–S45 participates in ATP binding.

It belongs to the tRNA(Ile)-lysidine synthase family.

It is found in the cytoplasm. It catalyses the reaction cytidine(34) in tRNA(Ile2) + L-lysine + ATP = lysidine(34) in tRNA(Ile2) + AMP + diphosphate + H(+). Its function is as follows. Ligates lysine onto the cytidine present at position 34 of the AUA codon-specific tRNA(Ile) that contains the anticodon CAU, in an ATP-dependent manner. Cytidine is converted to lysidine, thus changing the amino acid specificity of the tRNA from methionine to isoleucine. The chain is tRNA(Ile)-lysidine synthase from Prochlorococcus marinus subsp. pastoris (strain CCMP1986 / NIES-2087 / MED4).